Reading from the N-terminus, the 271-residue chain is Undecaprenyl-diphosphatase (271 aa).

8 helical membrane-spanning segments follow: residues 2 to 22 (LLIL…FVPV), 42 to 62 (ANLF…VVYW), 80 to 100 (LRFW…GFSL), 108 to 128 (LFNP…MIIV), 149 to 168 (SIFV…SRSA), 175 to 195 (WIAG…AIPV), 214 to 234 (IEFI…LVVI), and 248 to 268 (IFAI…IFKI).

The protein belongs to the UppP family.

It localises to the cell membrane. The enzyme catalyses di-trans,octa-cis-undecaprenyl diphosphate + H2O = di-trans,octa-cis-undecaprenyl phosphate + phosphate + H(+). In terms of biological role, catalyzes the dephosphorylation of undecaprenyl diphosphate (UPP). Confers resistance to bacitracin. In Clostridium tetani (strain Massachusetts / E88), this protein is Undecaprenyl-diphosphatase.